We begin with the raw amino-acid sequence, 495 residues long: uncharacterized protein (495 aa).

It localises to the cytoplasm. Its subcellular location is the nucleus. This is an uncharacterized protein from Saccharomyces cerevisiae (strain ATCC 204508 / S288c) (Baker's yeast).